The primary structure comprises 1116 residues: MAP kinase kinase kinase mkh1 (1116 aa).

2 disordered regions span residues 510–601 (LKMP…SNSL) and 618–647 (ALDE…ENHH). The span at 515–531 (NSGSSAPQSPSSNTSAS) shows a compositional bias: low complexity. Over residues 553-569 (LRRKNTLTRRPSIRHAR) the composition is skewed to basic residues. Over residues 588-601 (SFDPKASSKSSNSL) the composition is skewed to low complexity. Residues 634 to 647 (PKQSSSQVPKENHH) are compositionally biased toward polar residues. Residues 825–1094 (WMKGELIGNG…AEELLNHPFM (270 aa)) form the Protein kinase domain. ATP is bound by residues 831-839 (IGNGTYGKV) and lysine 854. Aspartate 955 serves as the catalytic Proton acceptor.

Belongs to the protein kinase superfamily. STE Ser/Thr protein kinase family. MAP kinase kinase kinase subfamily.

The enzyme catalyses L-seryl-[protein] + ATP = O-phospho-L-seryl-[protein] + ADP + H(+). It catalyses the reaction L-threonyl-[protein] + ATP = O-phospho-L-threonyl-[protein] + ADP + H(+). In terms of biological role, may regulate cell morphology, cell wall integrity, salt resistance, cell cycle reentry from stationary-phase arrest, and filamentous growth in response to stress. Activates the MAP kinase kinase skh1/pek1 by phosphorylation. This Schizosaccharomyces pombe (strain 972 / ATCC 24843) (Fission yeast) protein is MAP kinase kinase kinase mkh1 (mkh1).